Here is a 100-residue protein sequence, read N- to C-terminus: MIPLQHGLILAAILFILGLTGLVIRRNLLFMLIGLEIMINASALAFVVAGSYWGQTDGQVMYILAISLAAAEASIGLALLLQLHRRRQNLNIDSVSEMRG.

3 helical membrane passes run 4 to 24, 28 to 48, and 60 to 80; these read LQHGLILAAILFILGLTGLVI, LLFMLIGLEIMINASALAFVV, and VMYILAISLAAAEASIGLALL.

Belongs to the complex I subunit 4L family. NDH-1 is composed of 13 different subunits. Subunits NuoA, H, J, K, L, M, N constitute the membrane sector of the complex.

It localises to the cell inner membrane. The enzyme catalyses a quinone + NADH + 5 H(+)(in) = a quinol + NAD(+) + 4 H(+)(out). In terms of biological role, NDH-1 shuttles electrons from NADH, via FMN and iron-sulfur (Fe-S) centers, to quinones in the respiratory chain. The immediate electron acceptor for the enzyme in this species is believed to be ubiquinone. Couples the redox reaction to proton translocation (for every two electrons transferred, four hydrogen ions are translocated across the cytoplasmic membrane), and thus conserves the redox energy in a proton gradient. The chain is NADH-quinone oxidoreductase subunit K from Shigella sonnei (strain Ss046).